A 699-amino-acid chain; its full sequence is Auxin response factor 10 (699 aa).

Disordered regions lie at residues 108 to 136 (AAEA…DANN), 505 to 533 (TDLT…DDTK), and 551 to 595 (KNGN…SWSL). The span at 110–119 (EARREEENSR) shows a compositional bias: basic and acidic residues. Residues 125 to 135 (FAKTLTQSDAN) show a composition bias toward polar residues. A DNA-binding region (TF-B3) is located at residues 125-227 (FAKTLTQSDA…NIHVGLRRAK (103 aa)). The segment covering 570 to 593 (PNTSEGSDSGVTQGSPTKNTTPSW) has biased composition (polar residues). One can recognise a PB1 domain in the interval 613-693 (PGQCKVFVES…RKLRILTDAG (81 aa)).

This sequence belongs to the ARF family. Homodimers and heterodimers.

It is found in the nucleus. In terms of biological role, auxin response factors (ARFs) are transcriptional factors that bind specifically to the DNA sequence 5'-TGTCTC-3' found in the auxin-responsive promoter elements (AuxREs). This Oryza sativa subsp. indica (Rice) protein is Auxin response factor 10 (ARF10).